The sequence spans 250 residues: MKKEFLHFLAFLITFVFCVKTQQVVKILRSRTMIDFGLEFQKAQIEMHNNPEDRVRFVDAVNLCLPASDTFFQNPDRENKFSENYSIKLIDTTPHVSEIVLQTFVKEILSLSNINTEDTLGKETLGKETYRLSNLLKKSKFGMESHHRIQNNSEGPNTFENGLGISTPKHGIAHFADAIQRFLDHKGNSSSNTRAAGARVEAIREALNDRDAINKSEEARKAREEVFIPSEPSKPSIASKRSSASKSTKS.

A compositionally biased stretch (basic and acidic residues) spans Leu207 to Val226. Residues Leu207–Ser250 are disordered. Residues Ser233–Ser250 show a composition bias toward low complexity.

The protein localises to the plastid. It localises to the chloroplast. This is an uncharacterized protein from Chlorella vulgaris (Green alga).